The chain runs to 536 residues: CTP synthase (536 aa).

Residues 1-267 (MSKFVFVTGG…CKETLKYLEL (267 aa)) are amidoligase domain. Ser13 contacts CTP. Ser13 is a UTP binding site. ATP is bound by residues 14-19 (SIGKGI) and Asp71. Positions 71 and 141 each coordinate Mg(2+). Residues 148–150 (DIE), 188–193 (KTKPTQ), and Lys224 contribute to the CTP site. Residues 188–193 (KTKPTQ) and Lys224 contribute to the UTP site. Positions 292–534 (KVALVGKYIE…IKASQEKLTQ (243 aa)) constitute a Glutamine amidotransferase type-1 domain. Position 354 (Gly354) interacts with L-glutamine. Catalysis depends on Cys381, which acts as the Nucleophile; for glutamine hydrolysis. L-glutamine is bound by residues 382-385 (LGMQ), Glu405, and Arg462. Residues His507 and Glu509 contribute to the active site.

Belongs to the CTP synthase family. Homotetramer.

It catalyses the reaction UTP + L-glutamine + ATP + H2O = CTP + L-glutamate + ADP + phosphate + 2 H(+). The enzyme catalyses L-glutamine + H2O = L-glutamate + NH4(+). It carries out the reaction UTP + NH4(+) + ATP = CTP + ADP + phosphate + 2 H(+). The protein operates within pyrimidine metabolism; CTP biosynthesis via de novo pathway; CTP from UDP: step 2/2. Its activity is regulated as follows. Allosterically activated by GTP, when glutamine is the substrate; GTP has no effect on the reaction when ammonia is the substrate. The allosteric effector GTP functions by stabilizing the protein conformation that binds the tetrahedral intermediate(s) formed during glutamine hydrolysis. Inhibited by the product CTP, via allosteric rather than competitive inhibition. Its function is as follows. Catalyzes the ATP-dependent amination of UTP to CTP with either L-glutamine or ammonia as the source of nitrogen. Regulates intracellular CTP levels through interactions with the four ribonucleotide triphosphates. In Prochlorococcus marinus (strain MIT 9215), this protein is CTP synthase.